Here is a 267-residue protein sequence, read N- to C-terminus: 3-methyl-2-oxobutanoate hydroxymethyltransferase (267 aa).

Asp-46 and Asp-85 together coordinate Mg(2+). 3-methyl-2-oxobutanoate-binding positions include 46-47 (DS), Asp-85, and Lys-115. Glu-117 provides a ligand contact to Mg(2+). The Proton acceptor role is filled by Glu-184.

This sequence belongs to the PanB family. In terms of assembly, homodecamer; pentamer of dimers. Mg(2+) serves as cofactor.

It localises to the cytoplasm. The enzyme catalyses 3-methyl-2-oxobutanoate + (6R)-5,10-methylene-5,6,7,8-tetrahydrofolate + H2O = 2-dehydropantoate + (6S)-5,6,7,8-tetrahydrofolate. It functions in the pathway cofactor biosynthesis; (R)-pantothenate biosynthesis; (R)-pantoate from 3-methyl-2-oxobutanoate: step 1/2. In terms of biological role, catalyzes the reversible reaction in which hydroxymethyl group from 5,10-methylenetetrahydrofolate is transferred onto alpha-ketoisovalerate to form ketopantoate. The sequence is that of 3-methyl-2-oxobutanoate hydroxymethyltransferase from Geobacter sulfurreducens (strain ATCC 51573 / DSM 12127 / PCA).